Reading from the N-terminus, the 820-residue chain is Phenylalanine--tRNA ligase beta subunit (820 aa).

The region spanning 42–154 (KGGLEGLVIG…EDAVPGTLAK (113 aa)) is the tRNA-binding domain. In terms of domain architecture, B5 spans 413 to 489 (AQDFIVELTY…RIYGYNNVEI (77 aa)). Residues Asp467, Asp473, Glu476, and Asp477 each contribute to the Mg(2+) site. One can recognise an FDX-ACB domain in the interval 727-820 (SKFPAVKRDL…LEDKLGAKLR (94 aa)).

The protein belongs to the phenylalanyl-tRNA synthetase beta subunit family. Type 1 subfamily. As to quaternary structure, tetramer of two alpha and two beta subunits. Mg(2+) serves as cofactor.

It is found in the cytoplasm. The enzyme catalyses tRNA(Phe) + L-phenylalanine + ATP = L-phenylalanyl-tRNA(Phe) + AMP + diphosphate + H(+). In Bacteroides fragilis (strain ATCC 25285 / DSM 2151 / CCUG 4856 / JCM 11019 / LMG 10263 / NCTC 9343 / Onslow / VPI 2553 / EN-2), this protein is Phenylalanine--tRNA ligase beta subunit.